Here is a 51-residue protein sequence, read N- to C-terminus: uncharacterized protein (51 aa).

This is an uncharacterized protein from Thermoproteus tenax virus 1 (strain KRA1) (TTV1).